A 127-amino-acid polypeptide reads, in one-letter code: Ribosome-binding factor A (127 aa).

Belongs to the RbfA family. In terms of assembly, monomer. Binds 30S ribosomal subunits, but not 50S ribosomal subunits or 70S ribosomes.

Its subcellular location is the cytoplasm. Its function is as follows. One of several proteins that assist in the late maturation steps of the functional core of the 30S ribosomal subunit. Associates with free 30S ribosomal subunits (but not with 30S subunits that are part of 70S ribosomes or polysomes). Required for efficient processing of 16S rRNA. May interact with the 5'-terminal helix region of 16S rRNA. The polypeptide is Ribosome-binding factor A (Nitrosococcus oceani (strain ATCC 19707 / BCRC 17464 / JCM 30415 / NCIMB 11848 / C-107)).